We begin with the raw amino-acid sequence, 309 residues long: Protoheme IX farnesyltransferase 2 (309 aa).

8 consecutive transmembrane segments (helical) span residues 35–55, 59–79, 107–127, 131–151, 159–179, 186–206, 238–258, and 289–309; these read FKVVAMLVLTAWVGLALAPDV, MGVQFISLLGIGLLSAAAAVI, AHALSFAAIIGVAGFIMLMLW, LTAILTLFALVGYAFVYTSFL, IVIGGLAGAMPPLLGWVSETG, WLLVMIIFTWTPPHFWALAIA, LLAIVCIFPYLIGMSGLIYLI, and FSIIHLMVLFIILFIDKWLLL.

The protein belongs to the UbiA prenyltransferase family. Protoheme IX farnesyltransferase subfamily.

Its subcellular location is the cell inner membrane. It catalyses the reaction heme b + (2E,6E)-farnesyl diphosphate + H2O = Fe(II)-heme o + diphosphate. It participates in porphyrin-containing compound metabolism; heme O biosynthesis; heme O from protoheme: step 1/1. Functionally, converts heme B (protoheme IX) to heme O by substitution of the vinyl group on carbon 2 of heme B porphyrin ring with a hydroxyethyl farnesyl side group. This chain is Protoheme IX farnesyltransferase 2, found in Pseudoalteromonas translucida (strain TAC 125).